Here is a 254-residue protein sequence, read N- to C-terminus: rRNA N-glycosylase sapovaccarin-S2 (254 aa).

The protein belongs to the ribosome-inactivating protein family. Type 1 RIP subfamily. In terms of tissue distribution, expressed in seeds; most abundant in the perisperm.

The catalysed reaction is Endohydrolysis of the N-glycosidic bond at one specific adenosine on the 28S rRNA.. Exhibits N-glycosylase activity. Catalyzes the release of one adenine from a ribosome. Acts as a ribosome-inactivating protein and inhibits protein synthesis. Induces cell death in Huh-7 liver cells. May contribute to the protection against plant pests and predators or play a role in regulating the death of plant cells. This Gypsophila vaccaria (Cow soapwort) protein is rRNA N-glycosylase sapovaccarin-S2.